Here is a 712-residue protein sequence, read N- to C-terminus: Serrate RNA effector molecule homolog (712 aa).

Disordered stretches follow at residues 1–80 (MVDS…DSIY), 214–256 (ADIK…TEKS), and 620–712 (QRPV…DDIP). 2 stretches are compositionally biased toward basic and acidic residues: residues 8-26 (GDRR…DYRR) and 34-54 (YDNK…SRGD). Polar residues predominate over residues 65–79 (RSGNGSDLPTESDSI). Over residues 214 to 236 (ADIKKDENGNGTEQPKEEPEVKQ) the composition is skewed to basic and acidic residues. Residues 240–251 (ATEELEEGAIED) show a composition bias toward acidic residues. Basic and acidic residues-rich tracts occupy residues 621 to 637 (RPVD…DHRG) and 645 to 655 (GYGRERDDDRG). Residues 656 to 668 (PGGGGRNSFGGGG) are compositionally biased toward gly residues.

It belongs to the ARS2 family.

The protein localises to the nucleus. Its function is as follows. Acts as a mediator between the cap-binding complex (CBC) and the primary microRNAs (miRNAs) processing machinery. Contributes to the stability and delivery of capped primary miRNA transcripts to the primary miRNA processing complex, thereby playing a role in RNA-mediated gene silencing (RNAi) by miRNAs. In Caenorhabditis elegans, this protein is Serrate RNA effector molecule homolog.